Consider the following 193-residue polypeptide: Ion-translocating oxidoreductase complex subunit B (193 aa).

The segment at 1 to 26 is hydrophobic; it reads MSTMLIAVILLTLLALFFGVLLGFAA. The 59-residue stretch at 32–90 folds into the 4Fe-4S domain; it reads EGNPIVDELEAILPQTQCGQCGYPGCRPYAEAIANGDKVNKCPPGGTATMEKLASLMGV. The [4Fe-4S] cluster site is built by Cys49, Cys52, Cys57, Cys73, Cys114, Cys117, Cys120, Cys124, Cys144, Cys147, Cys150, and Cys154. 2 4Fe-4S ferredoxin-type domains span residues 105-134 and 136-164; these read KVAYIREDECIGCTKCIQACPVDAIIGAGK and MHTVLTADCTGCDLCVEPCPVDCIDMIPV.

It belongs to the 4Fe4S bacterial-type ferredoxin family. RnfB subfamily. As to quaternary structure, the complex is composed of six subunits: RnfA, RnfB, RnfC, RnfD, RnfE and RnfG. It depends on [4Fe-4S] cluster as a cofactor.

It is found in the cell inner membrane. Functionally, part of a membrane-bound complex that couples electron transfer with translocation of ions across the membrane. This chain is Ion-translocating oxidoreductase complex subunit B, found in Shewanella sp. (strain MR-7).